The following is a 155-amino-acid chain: Protein SprT-like (155 aa).

The SprT-like domain occupies 7-145 (QRHMEEVSLQ…GSCGGKLIQI (139 aa)). Position 67 (His67) interacts with Zn(2+). The active site involves Glu68. Zn(2+) is bound at residue His71.

It belongs to the SprT family. Requires Zn(2+) as cofactor.

Its subcellular location is the cytoplasm. The sequence is that of Protein SprT-like from Listeria monocytogenes serotype 4a (strain HCC23).